Here is a 274-residue protein sequence, read N- to C-terminus: 2,3,4,5-tetrahydropyridine-2,6-dicarboxylate N-succinyltransferase (274 aa).

Substrate-binding residues include Arg104 and Asp141.

This sequence belongs to the transferase hexapeptide repeat family. Homotrimer.

It localises to the cytoplasm. The enzyme catalyses (S)-2,3,4,5-tetrahydrodipicolinate + succinyl-CoA + H2O = (S)-2-succinylamino-6-oxoheptanedioate + CoA. It participates in amino-acid biosynthesis; L-lysine biosynthesis via DAP pathway; LL-2,6-diaminopimelate from (S)-tetrahydrodipicolinate (succinylase route): step 1/3. The protein is 2,3,4,5-tetrahydropyridine-2,6-dicarboxylate N-succinyltransferase of Edwardsiella ictaluri (strain 93-146).